Reading from the N-terminus, the 480-residue chain is uncharacterized protein (480 aa).

The helical transmembrane segment at 7–28 (HVISIFETFGAYFINIFYNFLY) threads the bilayer. N-linked (GlcNAc...) asparagine; by host glycans are attached at residues Asn-73 and Asn-195. The stretch at 195–235 (NRSLLYQIEELTSEKKSLLAELSTLRKKYEKRQSEYRRLVQ) forms a coiled coil. The disordered stretch occupies residues 297 to 332 (ELTSKSPSNYPVPQSRTIVSKPSDNYPVPQSRSSKI). Residues 301–329 (KSPSNYPVPQSRTIVSKPSDNYPVPQSRS) are compositionally biased toward polar residues. The N-linked (GlcNAc...) asparagine; by host glycan is linked to Asn-455.

Belongs to the asfivirus B475L family.

The protein resides in the host membrane. This is an uncharacterized protein from African swine fever virus (isolate Pig/Kenya/KEN-50/1950) (ASFV).